Here is a 156-residue protein sequence, read N- to C-terminus: Snaclec stejaggregin-B subunit alpha (156 aa).

Residues Met-1–Ala-23 form the signal peptide. 3 disulfide bridges follow: Cys-25-Cys-36, Cys-53-Cys-150, and Cys-125-Cys-142. Residues Phe-32 to Lys-151 enclose the C-type lectin domain.

This sequence belongs to the snaclec family. As to quaternary structure, heteromultimer; disulfide-linked. As to expression, expressed by the venom gland.

Its subcellular location is the secreted. Its function is as follows. Interferes with one step of hemostasis (modulation of platelet aggregation, or coagulation cascade, for example). This Trimeresurus stejnegeri (Chinese green tree viper) protein is Snaclec stejaggregin-B subunit alpha.